The following is a 285-amino-acid chain: Dermonecrotic toxin LiSicTox-alphaIA2aii (285 aa).

The propeptide occupies D1 to R5. H17 is an active-site residue. Residues E37 and D39 each contribute to the Mg(2+) site. The Nucleophile role is filled by H53. 2 disulfide bridges follow: C57-C63 and C59-C202. D97 provides a ligand contact to Mg(2+). N262 is a glycosylation site (N-linked (GlcNAc...) asparagine).

The protein belongs to the arthropod phospholipase D family. Class II subfamily. Class IIa sub-subfamily. It depends on Mg(2+) as a cofactor. Expressed by the venom gland.

It localises to the secreted. It carries out the reaction an N-(acyl)-sphingosylphosphocholine = an N-(acyl)-sphingosyl-1,3-cyclic phosphate + choline. The catalysed reaction is an N-(acyl)-sphingosylphosphoethanolamine = an N-(acyl)-sphingosyl-1,3-cyclic phosphate + ethanolamine. The enzyme catalyses a 1-acyl-sn-glycero-3-phosphocholine = a 1-acyl-sn-glycero-2,3-cyclic phosphate + choline. It catalyses the reaction a 1-acyl-sn-glycero-3-phosphoethanolamine = a 1-acyl-sn-glycero-2,3-cyclic phosphate + ethanolamine. In terms of biological role, dermonecrotic toxins cleave the phosphodiester linkage between the phosphate and headgroup of certain phospholipids (sphingolipid and lysolipid substrates), forming an alcohol (often choline) and a cyclic phosphate. This toxin acts on sphingomyelin (SM) with high activity. It may also act on ceramide phosphoethanolamine (CPE), lysophosphatidylcholine (LPC) and lysophosphatidylethanolamine (LPE), but not on lysophosphatidylserine (LPS), and lysophosphatidylglycerol (LPG). It acts by transphosphatidylation, releasing exclusively cyclic phosphate products as second products. Shows high hemolytic activity. Induces dermonecrosis, vascular permeability, edema, inflammatory response, and platelet aggregation. Also shows cytotoxicity against renal epithelial cells. In addition, also induces hemolysis in a complement-dependent manner and probably also in a complement-independent manner. The hemolysis provoked in a complement-independent manner may be composed of several steps. The toxin may bind to erythrocyte membranes, may hydrolyze membrane phospholipids (SM and LPC) thus generating metabolism products that may cause hemolysis, probably by provoking an increase of calcium inside cells. The calcium influx may be due to the opening of L-type calcium channels, since L-type calcium channel blockers inhibit calcium influx. In vivo, is lethal to mice when intraperitoneally injected. The protein is Dermonecrotic toxin LiSicTox-alphaIA2aii of Loxosceles intermedia (Brown spider).